We begin with the raw amino-acid sequence, 626 residues long: Colicin-Ib (626 aa).

Residues 276–286 (QQLTQQKNTPD) show a composition bias toward polar residues. Positions 276–308 (QQLTQQKNTPDGKTIVSPEKFPGRSSTNHSIVV) are disordered. The helical transmembrane segment at 588–612 (FSVMLGTPVGILGFAIIMAAVSALV) threads the bilayer.

Belongs to the channel forming colicin family.

It is found in the host membrane. Its function is as follows. This colicin is a channel-forming colicin. This class of transmembrane toxins depolarize the cytoplasmic membrane, leading to dissipation of cellular energy. In terms of biological role, colicins are polypeptide toxins produced by and active against E.coli and closely related bacteria. The protein is Colicin-Ib (cib) of Escherichia coli.